The sequence spans 337 residues: Basic membrane protein A1 (337 aa).

Residues 1 to 17 (MNKLLLLILFECIIFLS) form the signal peptide. Cys-18 is lipidated: N-palmitoyl cysteine. Cys-18 carries the S-diacylglycerol cysteine lipid modification.

This sequence belongs to the BMP lipoprotein family. Monomer.

It localises to the cell inner membrane. Its function is as follows. Immunogenic protein. May be part of an ABC-type nucleoside uptake system involved in the purine salvage pathway. The sequence is that of Basic membrane protein A1 (bmpA1) from Borrelia garinii subsp. bavariensis (strain ATCC BAA-2496 / DSM 23469 / PBi) (Borreliella bavariensis).